The primary structure comprises 275 residues: Large ribosomal subunit protein uL2 (275 aa).

A disordered region spans residues 221–275; it reads RGSAMTPRDHPHGGGEGKAPRGMPPKTPWGKPALGKRTRRNKKSDRFIIRRRYEA. Residues 227–239 are compositionally biased toward basic and acidic residues; sequence PRDHPHGGGEGKA. The segment covering 254-263 has biased composition (basic residues); the sequence is LGKRTRRNKK. Residues 264–275 are compositionally biased toward basic and acidic residues; that stretch reads SDRFIIRRRYEA.

Belongs to the universal ribosomal protein uL2 family. In terms of assembly, part of the 50S ribosomal subunit. Forms a bridge to the 30S subunit in the 70S ribosome.

Functionally, one of the primary rRNA binding proteins. Required for association of the 30S and 50S subunits to form the 70S ribosome, for tRNA binding and peptide bond formation. It has been suggested to have peptidyltransferase activity; this is somewhat controversial. Makes several contacts with the 16S rRNA in the 70S ribosome. The polypeptide is Large ribosomal subunit protein uL2 (Thermomicrobium roseum (strain ATCC 27502 / DSM 5159 / P-2)).